A 303-amino-acid polypeptide reads, in one-letter code: Putative band 7 family protein R614 (303 aa).

This sequence belongs to the band 7/mec-2 family.

The chain is Putative band 7 family protein R614 from Acanthamoeba polyphaga (Amoeba).